The chain runs to 80 residues: Adipogenin (80 aa).

The helical transmembrane segment at 14–34 (FSFLVFWFCLPVGLLLLLIIW) threads the bilayer.

The protein belongs to the adipogenin family.

Its subcellular location is the membrane. It localises to the nucleus. Its function is as follows. Plays a role in stimulating adipocyte differentiation and development. The sequence is that of Adipogenin from Homo sapiens (Human).